A 188-amino-acid polypeptide reads, in one-letter code: F-box only protein 36 (188 aa).

The 47-residue stretch at 91–137 folds into the F-box domain; the sequence is FDYLERLSDRLLLKIICYLDLEDIASLSQTSSKFEKLCKSDLLWEQI.

As to quaternary structure, directly interacts with SKP1 and CUL1.

Substrate-recognition component of the SCF (SKP1-CUL1-F-box protein)-type E3 ubiquitin ligase complex. The sequence is that of F-box only protein 36 (Fbxo36) from Mus musculus (Mouse).